The following is a 173-amino-acid chain: dCTP deaminase, dUMP-forming (173 aa).

Residues 93-98 (RSSIGR), Asp111, 119-121 (TLE), and Gln138 each bind dCTP. Glu121 acts as the Proton donor/acceptor in catalysis.

It belongs to the dCTP deaminase family. Homotrimer.

The catalysed reaction is dCTP + 2 H2O = dUMP + NH4(+) + diphosphate. The protein operates within pyrimidine metabolism; dUMP biosynthesis; dUMP from dCTP: step 1/1. In terms of biological role, bifunctional enzyme that catalyzes both the deamination of dCTP to dUTP and the hydrolysis of dUTP to dUMP without releasing the toxic dUTP intermediate. This is dCTP deaminase, dUMP-forming from Leptospira borgpetersenii serovar Hardjo-bovis (strain JB197).